The sequence spans 232 residues: tRNA (guanine-N(7)-)-methyltransferase (232 aa).

S-adenosyl-L-methionine-binding residues include glutamate 63, glutamate 88, aspartate 115, and aspartate 137. Aspartate 137 is an active-site residue. Residues lysine 141, aspartate 173, and 211–214 (TRYE) each bind substrate.

Belongs to the class I-like SAM-binding methyltransferase superfamily. TrmB family.

It catalyses the reaction guanosine(46) in tRNA + S-adenosyl-L-methionine = N(7)-methylguanosine(46) in tRNA + S-adenosyl-L-homocysteine. The protein operates within tRNA modification; N(7)-methylguanine-tRNA biosynthesis. In terms of biological role, catalyzes the formation of N(7)-methylguanine at position 46 (m7G46) in tRNA. This is tRNA (guanine-N(7)-)-methyltransferase from Agrobacterium fabrum (strain C58 / ATCC 33970) (Agrobacterium tumefaciens (strain C58)).